The primary structure comprises 184 residues: Shikimate kinase (184 aa).

Position 20–25 (20–25 (GVGKSR)) interacts with ATP. S24 provides a ligand contact to Mg(2+). Positions 42, 66, and 88 each coordinate substrate. R127 is a binding site for ATP. Residue R146 participates in substrate binding. R162 is an ATP binding site.

Belongs to the shikimate kinase family. In terms of assembly, monomer. Mg(2+) is required as a cofactor.

The protein localises to the cytoplasm. The enzyme catalyses shikimate + ATP = 3-phosphoshikimate + ADP + H(+). Its pathway is metabolic intermediate biosynthesis; chorismate biosynthesis; chorismate from D-erythrose 4-phosphate and phosphoenolpyruvate: step 5/7. Its function is as follows. Catalyzes the specific phosphorylation of the 3-hydroxyl group of shikimic acid using ATP as a cosubstrate. In Thermus thermophilus (strain ATCC BAA-163 / DSM 7039 / HB27), this protein is Shikimate kinase.